A 151-amino-acid chain; its full sequence is Internal scaffolding protein VP3 (151 aa).

The disordered stretch occupies residues 120–151 (VETPQQAPQSTTNQTTTKPAPASGEPTPVPTP). Over residues 122 to 137 (TPQQAPQSTTNQTTTK) the composition is skewed to polar residues.

It belongs to the microvidae B protein family.

Its subcellular location is the host cytoplasm. Functionally, participates in the assembly of the viral procapsid in the cytoplasm. Internal scaffolding protein VP3 is released from the procapsid upon genome packaging, possibly through affinity displacement by the protein VP8, or by proteolysis. This is Internal scaffolding protein VP3 from Bdellovibrio bacteriovorus (Bacteriophage phiMH2K).